The following is a 432-amino-acid chain: MASNVEDTLIKLDRLHSVDYKNDEVQLIKSKIEGIVHQISNRIGELNPILSNSVVHCGSFYHNSKINAPDEFDFLLVLNKFSQPGVCSCKPFEDPEYTHLVSLGIDNTKLNWNPQSVLEWEEDAANKQTLLQATIDSEYRNAVCSCLATMSLPDGISLTTSQKSVRRRFEGGEEFLANFKFSGPALTLLLNWKGVYYPNLNISVDVTYVIAMRGLPSFCNLDKRLPSEHLIVKAGLCADASHELLYCRMLDDTWKQTCSVLENKIICFWFKENDASNVCYRLLKIIRNLVTPVNQLGEAFLKTYALKTLFLYECEQFPDSKFWRTDELSTHLLTIFQKLLSAIQNRFLPNYFNENQNALCYPLDSRPEDENEEGENKFISSVYEAMCKIIEDIISSLEKGLASEQTLKFYFEPGQKIVIKDPDIQDALEKEN.

ATP-binding positions include S59 and E71–D73. Mg(2+) is bound by residues E71, D73, and D205. GTP-binding positions include D205 and K255 to E262. ATP is bound by residues S259 to E262, K284, and T303 to K307.

The protein belongs to the mab-21 family. The cofactor is Mg(2+). Mn(2+) is required as a cofactor.

The catalysed reaction is GTP + ATP = 2',3'-cGAMP + 2 diphosphate. It carries out the reaction GTP + ATP = pppGp(2'-5')A + diphosphate. The enzyme catalyses pppGp(2'-5')A = 2',3'-cGAMP + diphosphate. In terms of biological role, nucleotidyltransferase that catalyzes the formation of cyclic GMP-AMP (2',3'-cGAMP) from ATP and GTP and plays a key role in innate immunity. Directly binds some unknown ligand, activating the nucleotidyltransferase activity, leading to synthesis of 2',3'-cGAMP, a second messenger that binds to and activates Sting, thereby triggering the immune response via activation of the NF-kappa-B transcription factor. This Pocillopora damicornis (Cauliflower coral) protein is Cyclic GMP-AMP synthase-like receptor.